Here is a 305-residue protein sequence, read N- to C-terminus: MSSLVRPINLGKINHSQSTVKDYILLMKPRVMSLVIFTGFVGMWLAPYSVHPFIAGIAVVCIALGAGSAGAINMWYDRDIDSLMKRTQKRPIVRGVIESDEALSFGLITGFFAVFFMALCVNLLASFLLLFTIFYYICIYTIWLKRRSIQNIVIGGVSGALPPVIGYAAVSNTISLESIILFLIIFIWTPPHSWALALFCNDDYKNCKVPMMPAVKGTLYTKKQILIYSILLFIVSLMPFFIGMNNFIYLIISGILGVVFLYYAGSLFYDTPDNKQAKRFFAYSIFYLFFIFLLLYSTNTISTIS.

9 consecutive transmembrane segments (helical) span residues 31–51 (VMSL…YSVH), 52–72 (PFIA…AGAI), 96–118 (VIES…FFMA), 123–145 (LLAS…IWLK), 151–171 (NIVI…AAVS), 179–199 (IILF…LALF), 225–245 (ILIY…IGMN), 247–267 (FIYL…AGSL), and 281–301 (FAYS…TNTI).

Belongs to the UbiA prenyltransferase family. Protoheme IX farnesyltransferase subfamily.

It localises to the cell membrane. It carries out the reaction heme b + (2E,6E)-farnesyl diphosphate + H2O = Fe(II)-heme o + diphosphate. It participates in porphyrin-containing compound metabolism; heme O biosynthesis; heme O from protoheme: step 1/1. Its function is as follows. Converts heme B (protoheme IX) to heme O by substitution of the vinyl group on carbon 2 of heme B porphyrin ring with a hydroxyethyl farnesyl side group. The chain is Protoheme IX farnesyltransferase from Rickettsia africae (strain ESF-5).